A 136-amino-acid chain; its full sequence is Large ribosomal subunit protein uL16 (136 aa).

This sequence belongs to the universal ribosomal protein uL16 family. In terms of assembly, part of the 50S ribosomal subunit.

Binds 23S rRNA and is also seen to make contacts with the A and possibly P site tRNAs. This chain is Large ribosomal subunit protein uL16, found in Shewanella piezotolerans (strain WP3 / JCM 13877).